The sequence spans 494 residues: Alpha-amylase-related protein (494 aa).

The N-terminal stretch at 1-20 (MFKFAAAVILCLVAASSTLA) is a signal peptide. Pyrrolidone carboxylic acid is present on glutamine 21. Residues cysteine 48 and cysteine 104 are joined by a disulfide bond. Ca(2+)-binding residues include asparagine 118, glutamine 169, and aspartate 178. A disulfide bond links cysteine 157 and cysteine 171. Arginine 206 provides a ligand contact to chloride. Aspartate 208 functions as the Nucleophile in the catalytic mechanism. Residue histidine 212 coordinates Ca(2+). Glutamate 245 acts as the Proton donor in catalysis. Residues asparagine 308 and arginine 343 each contribute to the chloride site. 3 disulfides stabilise this stretch: cysteine 376/cysteine 382, cysteine 418/cysteine 441, and cysteine 448/cysteine 460.

The protein belongs to the glycosyl hydrolase 13 family. As to quaternary structure, monomer. The cofactor is Ca(2+). Chloride serves as cofactor.

It localises to the secreted. It carries out the reaction Endohydrolysis of (1-&gt;4)-alpha-D-glucosidic linkages in polysaccharides containing three or more (1-&gt;4)-alpha-linked D-glucose units.. The chain is Alpha-amylase-related protein (Amyrel) from Drosophila atripex (Fruit fly).